The primary structure comprises 269 residues: tRNA pseudouridine synthase A (269 aa).

Residue Asp-55 is the Nucleophile of the active site. Residue Tyr-111 participates in substrate binding.

This sequence belongs to the tRNA pseudouridine synthase TruA family.

It carries out the reaction uridine(38/39/40) in tRNA = pseudouridine(38/39/40) in tRNA. Formation of pseudouridine at positions 38, 39 and 40 in the anticodon stem and loop of transfer RNAs. The protein is tRNA pseudouridine synthase A of Methanosarcina acetivorans (strain ATCC 35395 / DSM 2834 / JCM 12185 / C2A).